We begin with the raw amino-acid sequence, 89 residues long: FXYD domain-containing ion transport regulator 4 (89 aa).

A signal peptide spans 1-20 (MERVTLALLLLAGLTALEAN). The Extracellular segment spans residues 21–38 (DPFANKDDPFYYDWKNLQ). A helical transmembrane segment spans residues 39 to 59 (LSGLICGGLLAIAGIAAVLSG). The Cytoplasmic segment spans residues 60 to 89 (KCKCKSSQKQHSPVPEKAIPLITPGSATTC).

The protein belongs to the FXYD family. In terms of assembly, regulatory subunit of the sodium/potassium-transporting ATPase which is composed of a catalytic alpha subunit, a non-catalytic beta subunit and a regulatory subunit. The regulatory subunit, a member of the FXYD protein family, modulates the enzymatic activity in a tissue- and isoform-specific way by changing affinities of the Na+/K+-ATPase toward Na(+), K(+) or ATP.

It is found in the cell membrane. The protein resides in the basolateral cell membrane. Its function is as follows. Associates with and regulates the activity of the sodium/potassium-transporting ATPase (NKA) which catalyzes the hydrolysis of ATP coupled with the exchange of Na(+) and K(+) ions across the plasma membrane. Increases the apparent affinity of the transporter for Na(+) and increases NKA activity. This is FXYD domain-containing ion transport regulator 4 (FXYD4) from Homo sapiens (Human).